The primary structure comprises 419 residues: Tyrosine--tRNA ligase (419 aa).

Residue tyrosine 34 coordinates L-tyrosine. Positions proline 39 to histidine 48 match the 'HIGH' region motif. L-tyrosine is bound by residues tyrosine 168 and glutamine 172. Residues lysine 230–serine 234 carry the 'KMSKS' region motif. Lysine 233 contributes to the ATP binding site. The region spanning alanine 352 to tyrosine 418 is the S4 RNA-binding domain.

The protein belongs to the class-I aminoacyl-tRNA synthetase family. TyrS type 1 subfamily. Homodimer.

The protein resides in the cytoplasm. It catalyses the reaction tRNA(Tyr) + L-tyrosine + ATP = L-tyrosyl-tRNA(Tyr) + AMP + diphosphate + H(+). Catalyzes the attachment of tyrosine to tRNA(Tyr) in a two-step reaction: tyrosine is first activated by ATP to form Tyr-AMP and then transferred to the acceptor end of tRNA(Tyr). The protein is Tyrosine--tRNA ligase of Listeria monocytogenes serotype 4b (strain CLIP80459).